A 473-amino-acid polypeptide reads, in one-letter code: MLRNRLFKTPHQTGFQWRLGAPATGITIRNQPIRSYSGLRGNFLIDKRLSPVKFNKYSPSDIVFYNIGSSRLYSTETPTPSKVKEAPKQVAAEETKPTTVVKKPSIWQRVKGGVLHFWDGTKLLGVEIKISSKLVYKMAVGYELTRRESRQLTRTLKDIGRLVPFSVFVVVPFAELLLPIAVKLFPNLLPSTFEDAKDKEAKKAQLRKTRNEVSNMLRSTLKSGKFTFSNETRESKEFRDFFQKVRTSGQSPSREELIEVCKYFKDDITLDNLSRAQLVAMCRYMNLNAFGTDPLLRYNIRHRMRQIRRDDRAIYIEGINSLSIPELFNACNSRGIRTQGLSPAKLKEELSVWLDMRIKHGIPSVILMLSNAFSYGYNEGTYDSRWDALQDTLASIPDELYHETVVDMPTKQVSNKERLEILREQEELIEEEAEHVAEHPDLAKKQTEENKATSKPAVSAKSPESNIPKNERK.

A mitochondrion-targeting transit peptide spans 1-73 (MLRNRLFKTP…FYNIGSSRLY (73 aa)). Residues 74-161 (STETPTPSKV…LTRTLKDIGR (88 aa)) lie on the Mitochondrial intermembrane side of the membrane. The chain crosses the membrane as a helical span at residues 162-182 (LVPFSVFVVVPFAELLLPIAV). Topologically, residues 183–473 (KLFPNLLPST…ESNIPKNERK (291 aa)) are mitochondrial matrix. The Letm1 RBD domain occupies 205–398 (QLRKTRNEVS…LQDTLASIPD (194 aa)). The disordered stretch occupies residues 430–473 (EEEAEHVAEHPDLAKKQTEENKATSKPAVSAKSPESNIPKNERK). Residues 434–452 (EHVAEHPDLAKKQTEENKA) are compositionally biased toward basic and acidic residues. Positions 462–473 (SPESNIPKNERK) are enriched in polar residues.

Its subcellular location is the mitochondrion inner membrane. Its function is as follows. Involved in mitochondrial potassium homeostasis through the mitochondrial K(+)/H(+) exchange regulation. This chain is LETM1 domain-containing protein mdm28, mitochondrial (mdm28), found in Schizosaccharomyces pombe (strain 972 / ATCC 24843) (Fission yeast).